A 108-amino-acid polypeptide reads, in one-letter code: MMKGGMGNLMKQAQEMQEKMQKIQEEIAETEVTGEAGAGMIKVTMNGRHDVSRVNVDPSVMEEDKELLEDLLAAAVNDAVRKVEETSRGRMEEATEGMNLPPGFKMPF.

Residues 84–93 show a composition bias toward basic and acidic residues; it reads EETSRGRMEE. Positions 84–108 are disordered; the sequence is EETSRGRMEEATEGMNLPPGFKMPF.

This sequence belongs to the YbaB/EbfC family. As to quaternary structure, homodimer.

The protein resides in the cytoplasm. Its subcellular location is the nucleoid. Functionally, binds to DNA and alters its conformation. May be involved in regulation of gene expression, nucleoid organization and DNA protection. The sequence is that of Nucleoid-associated protein Csal_1459 from Chromohalobacter salexigens (strain ATCC BAA-138 / DSM 3043 / CIP 106854 / NCIMB 13768 / 1H11).